The sequence spans 557 residues: Formate--tetrahydrofolate ligase 2 (557 aa).

ATP is bound at residue 66-73 (TPAGEGKT).

Belongs to the formate--tetrahydrofolate ligase family.

The catalysed reaction is (6S)-5,6,7,8-tetrahydrofolate + formate + ATP = (6R)-10-formyltetrahydrofolate + ADP + phosphate. It functions in the pathway one-carbon metabolism; tetrahydrofolate interconversion. In Streptococcus pyogenes serotype M1, this protein is Formate--tetrahydrofolate ligase 2.